Here is a 226-residue protein sequence, read N- to C-terminus: ATP synthase F(0) complex subunit a (226 aa).

A run of 6 helical transmembrane segments spans residues 11-31 (APTI…TLLI), 68-88 (WSLM…LGLL), 97-117 (QLSM…ITGL), 138-158 (IPML…ALAV), 164-184 (ITAG…LSTI), and 194-214 (VLLM…AYVF).

This sequence belongs to the ATPase A chain family. In terms of assembly, component of the ATP synthase complex composed at least of ATP5F1A/subunit alpha, ATP5F1B/subunit beta, ATP5MC1/subunit c (homooctomer), MT-ATP6/subunit a, MT-ATP8/subunit 8, ATP5ME/subunit e, ATP5MF/subunit f, ATP5MG/subunit g, ATP5MK/subunit k, ATP5MJ/subunit j, ATP5F1C/subunit gamma, ATP5F1D/subunit delta, ATP5F1E/subunit epsilon, ATP5PF/subunit F6, ATP5PB/subunit b, ATP5PD/subunit d, ATP5PO/subunit OSCP. ATP synthase complex consists of a soluble F(1) head domain (subunits alpha(3) and beta(3)) - the catalytic core - and a membrane F(0) domain - the membrane proton channel (subunits c, a, 8, e, f, g, k and j). These two domains are linked by a central stalk (subunits gamma, delta, and epsilon) rotating inside the F1 region and a stationary peripheral stalk (subunits F6, b, d, and OSCP). Interacts with DNAJC30; interaction is direct.

The protein resides in the mitochondrion inner membrane. It catalyses the reaction H(+)(in) = H(+)(out). Its function is as follows. Subunit a, of the mitochondrial membrane ATP synthase complex (F(1)F(0) ATP synthase or Complex V) that produces ATP from ADP in the presence of a proton gradient across the membrane which is generated by electron transport complexes of the respiratory chain. ATP synthase complex consist of a soluble F(1) head domain - the catalytic core - and a membrane F(1) domain - the membrane proton channel. These two domains are linked by a central stalk rotating inside the F(1) region and a stationary peripheral stalk. During catalysis, ATP synthesis in the catalytic domain of F(1) is coupled via a rotary mechanism of the central stalk subunits to proton translocation. With the subunit c (ATP5MC1), forms the proton-conducting channel in the F(0) domain, that contains two crucial half-channels (inlet and outlet) that facilitate proton movement from the mitochondrial intermembrane space (IMS) into the matrix. Protons are taken up via the inlet half-channel and released through the outlet half-channel, following a Grotthuss mechanism. The chain is ATP synthase F(0) complex subunit a from Papio hamadryas (Hamadryas baboon).